The sequence spans 379 residues: UDP-4-amino-4-deoxy-L-arabinose--oxoglutarate aminotransferase (379 aa).

At K182 the chain carries N6-(pyridoxal phosphate)lysine.

Belongs to the DegT/DnrJ/EryC1 family. ArnB subfamily. Homodimer. The cofactor is pyridoxal 5'-phosphate.

The enzyme catalyses UDP-4-amino-4-deoxy-beta-L-arabinose + 2-oxoglutarate = UDP-beta-L-threo-pentopyranos-4-ulose + L-glutamate. Its pathway is nucleotide-sugar biosynthesis; UDP-4-deoxy-4-formamido-beta-L-arabinose biosynthesis; UDP-4-deoxy-4-formamido-beta-L-arabinose from UDP-alpha-D-glucuronate: step 2/3. It functions in the pathway bacterial outer membrane biogenesis; lipopolysaccharide biosynthesis. In terms of biological role, catalyzes the conversion of UDP-4-keto-arabinose (UDP-Ara4O) to UDP-4-amino-4-deoxy-L-arabinose (UDP-L-Ara4N). The modified arabinose is attached to lipid A and is required for resistance to polymyxin and cationic antimicrobial peptides. This is UDP-4-amino-4-deoxy-L-arabinose--oxoglutarate aminotransferase from Escherichia coli O127:H6 (strain E2348/69 / EPEC).